Reading from the N-terminus, the 565-residue chain is Adenine deaminase (565 aa).

Belongs to the metallo-dependent hydrolases superfamily. Adenine deaminase family. Requires Mn(2+) as cofactor.

The enzyme catalyses adenine + H2O + H(+) = hypoxanthine + NH4(+). The protein is Adenine deaminase of Methylobacterium nodulans (strain LMG 21967 / CNCM I-2342 / ORS 2060).